The chain runs to 337 residues: Annexin E1 (337 aa).

4 Annexin repeats span residues 10–80 (TGVT…MLYK), 81–154 (PRAQ…AVAT), 161–238 (DTHE…LAHD), and 242–312 (DPCC…LLWE).

The protein belongs to the annexin family.

It localises to the cell projection. Its subcellular location is the cilium. The protein resides in the flagellum. May function as a calcium-regulated structural element linking phospholipid bilayer and underlying axoneme. This is Annexin E1 (ANXE1) from Giardia intestinalis (Giardia lamblia).